The following is a 977-amino-acid chain: RNA-binding protein 15 (977 aa).

Composition is skewed to basic and acidic residues over residues 1–10 (MRTAGRDPVP), 35–52 (RGDD…ERSP), 59–72 (RGGE…ERSK), and 98–113 (LHLD…REYD). Residues 1–167 (MRTAGRDPVP…SSAPGGGDGA (167 aa)) form a disordered region. Residue serine 109 is modified to Phosphoserine. The span at 119-130 (SSSRLHSYSSPS) shows a compositional bias: low complexity. Residues 135 to 150 (SGGGESRSSSRGGGGE) show a composition bias toward gly residues. The span at 151–160 (SRSSGAASSA) shows a compositional bias: low complexity. The 83-residue stretch at 170–252 (KTLKISELGS…RPLKIEAVYV (83 aa)) folds into the RRM 1 domain. A phosphoserine mark is found at serine 179, serine 208, and serine 210. Residue lysine 246 forms a Glycyl lysine isopeptide (Lys-Gly) (interchain with G-Cter in SUMO2) linkage. Residues serine 253, serine 257, and serine 259 each carry the phosphoserine modification. Residues 256 to 298 (RSRSPLDKDTYPPSASVVGASVGGHRHPPGGGGGQRSLSPGGA) are disordered. Residue tyrosine 266 is modified to Phosphotyrosine. A phosphoserine mark is found at serine 292, serine 294, and serine 365. 2 consecutive RRM domains span residues 374–451 (RTLF…YGKA) and 455–529 (TRLW…FADT). Glycyl lysine isopeptide (Lys-Gly) (interchain with G-Cter in SUMO2) cross-links involve residues lysine 406, lysine 420, and lysine 445. Position 450 is an N6-acetyllysine (lysine 450). Composition is skewed to basic and acidic residues over residues 555–581 (HRAP…RDLY) and 613–661 (SLDR…ESDR). The segment at 555 to 778 (HRAPDPLRGA…KQDGGTAPVA (224 aa)) is disordered. Phosphothreonine is present on threonine 568. Position 578 is an asymmetric dimethylarginine; alternate; by PRMT1 (arginine 578). The residue at position 578 (arginine 578) is an Omega-N-methylarginine; alternate; by PRMT1. Phosphoserine is present on residues serine 622, serine 656, serine 670, serine 674, serine 700, and serine 741. Basic and acidic residues-rich tracts occupy residues 673 to 728 (RSPE…AERD) and 741 to 750 (SPLKKEDRSD). Lysine 744 participates in a covalent cross-link: Glycyl lysine isopeptide (Lys-Gly) (interchain with G-Cter in SUMO2). Residues 752 to 771 (SAPSTSTASSKLKSPSQKQD) are compositionally biased toward polar residues. A phosphoserine mark is found at serine 765, serine 767, and serine 781. Positions 777–956 (VASASPKLCL…YLVMIIVRGF (180 aa)) constitute an SPOC domain. The segment at 865 to 884 (GSSDSRSSSSSAASDTATST) is disordered. Positions 866–884 (SSDSRSSSSSAASDTATST) are enriched in low complexity. Serine 935 bears the Phosphoserine mark.

This sequence belongs to the RRM Spen family. Component of the WMM complex, a N6-methyltransferase complex composed of a catalytic subcomplex, named MAC, and of an associated subcomplex, named MACOM. The MAC subcomplex is composed of METTL3 and METTL14. The MACOM subcomplex is composed of WTAP, ZC3H13, CBLL1/HAKAI, VIRMA, and, in some cases of RBM15 (RBM15 or RBM15B). Also a component of a MACOM-like complex, named WTAP complex, composed of WTAP, ZC3H13, CBLL1, VIRMA, RBM15, BCLAF1 and THRAP3. Interacts with RBPJ. Interacts (via SPOC domain) with SETD1B. Interacts with NXF1, the interaction is required to promote mRNA export. Interacts with SF3B1. In terms of assembly, (Microbial infection) Interacts with Epstein-Barr virus BSFL2/BMLF1. In terms of processing, methylated at Arg-578 by PRMT1, leading to promote ubiquitination by CNOT4 and subsequent degradation by the proteasome. Ubiquitinated by CNOT4 following methylation at Arg-578 by PRMT1.

The protein localises to the nucleus speckle. It is found in the nucleus. Its subcellular location is the nucleoplasm. It localises to the nucleus envelope. The protein resides in the nucleus membrane. In terms of biological role, RNA-binding protein that acts as a key regulator of N6-methyladenosine (m6A) methylation of RNAs, thereby regulating different processes, such as hematopoietic cell homeostasis, alternative splicing of mRNAs and X chromosome inactivation mediated by Xist RNA. Associated component of the WMM complex, a complex that mediates N6-methyladenosine (m6A) methylation of RNAs, a modification that plays a role in the efficiency of mRNA splicing and RNA processing. Plays a key role in m6A methylation, possibly by binding target RNAs and recruiting the WMM complex. Involved in random X inactivation mediated by Xist RNA: acts by binding Xist RNA and recruiting the WMM complex, which mediates m6A methylation, leading to target YTHDC1 reader on Xist RNA and promoting transcription repression activity of Xist. Required for the development of multiple tissues, such as the maintenance of the homeostasis of long-term hematopoietic stem cells and for megakaryocyte (MK) and B-cell differentiation. Regulates megakaryocyte differentiation by regulating alternative splicing of genes important for megakaryocyte differentiation; probably regulates alternative splicing via m6A regulation. Required for placental vascular branching morphogenesis and embryonic development of the heart and spleen. Acts as a regulator of thrombopoietin response in hematopoietic stem cells by regulating alternative splicing of MPL. May also function as an mRNA export factor, stimulating export and expression of RTE-containing mRNAs which are present in many retrotransposons that require to be exported prior to splicing. High affinity binding of pre-mRNA to RBM15 may allow targeting of the mRNP to the export helicase DBP5 in a manner that is independent of splicing-mediated NXF1 deposition, resulting in export prior to splicing. May be implicated in HOX gene regulation. The polypeptide is RNA-binding protein 15 (Homo sapiens (Human)).